The following is a 232-amino-acid chain: Small ribosomal subunit protein uS2 (232 aa).

Belongs to the universal ribosomal protein uS2 family.

The protein is Small ribosomal subunit protein uS2 of Heliobacterium modesticaldum (strain ATCC 51547 / Ice1).